A 158-amino-acid chain; its full sequence is 6,7-dimethyl-8-ribityllumazine synthase (158 aa).

5-amino-6-(D-ribitylamino)uracil is bound by residues phenylalanine 23, 61–63, and 85–87; these read SFE and AVI. 90–91 contributes to the (2S)-2-hydroxy-3-oxobutyl phosphate binding site; the sequence is DT. Histidine 93 acts as the Proton donor in catalysis. Position 118 (phenylalanine 118) interacts with 5-amino-6-(D-ribitylamino)uracil. Residue arginine 132 coordinates (2S)-2-hydroxy-3-oxobutyl phosphate.

It belongs to the DMRL synthase family.

It catalyses the reaction (2S)-2-hydroxy-3-oxobutyl phosphate + 5-amino-6-(D-ribitylamino)uracil = 6,7-dimethyl-8-(1-D-ribityl)lumazine + phosphate + 2 H2O + H(+). The protein operates within cofactor biosynthesis; riboflavin biosynthesis; riboflavin from 2-hydroxy-3-oxobutyl phosphate and 5-amino-6-(D-ribitylamino)uracil: step 1/2. Its function is as follows. Catalyzes the formation of 6,7-dimethyl-8-ribityllumazine by condensation of 5-amino-6-(D-ribitylamino)uracil with 3,4-dihydroxy-2-butanone 4-phosphate. This is the penultimate step in the biosynthesis of riboflavin. The chain is 6,7-dimethyl-8-ribityllumazine synthase from Prochlorococcus marinus (strain NATL2A).